The chain runs to 37 residues: Cytochrome b6-f complex subunit 5 (37 aa).

Residues 5-25 form a helical membrane-spanning segment; sequence LLSGVVLGLILVTLSGLFFAA.

The protein belongs to the PetG family. As to quaternary structure, the 4 large subunits of the cytochrome b6-f complex are cytochrome b6, subunit IV (17 kDa polypeptide, PetD), cytochrome f and the Rieske protein, while the 4 small subunits are PetG, PetL, PetM and PetN. The complex functions as a dimer.

Its subcellular location is the cellular thylakoid membrane. Functionally, component of the cytochrome b6-f complex, which mediates electron transfer between photosystem II (PSII) and photosystem I (PSI), cyclic electron flow around PSI, and state transitions. PetG is required for either the stability or assembly of the cytochrome b6-f complex. This is Cytochrome b6-f complex subunit 5 from Trichodesmium erythraeum (strain IMS101).